Reading from the N-terminus, the 416-residue chain is Enolase (416 aa).

Gln-160 is a (2R)-2-phosphoglycerate binding site. Glu-204 functions as the Proton donor in the catalytic mechanism. 3 residues coordinate Mg(2+): Asp-239, Glu-280, and Asp-306. (2R)-2-phosphoglycerate is bound by residues Lys-331, Arg-360, Ser-361, and Lys-382. Residue Lys-331 is the Proton acceptor of the active site.

It belongs to the enolase family. It depends on Mg(2+) as a cofactor.

The protein resides in the cytoplasm. It is found in the secreted. It localises to the cell surface. The catalysed reaction is (2R)-2-phosphoglycerate = phosphoenolpyruvate + H2O. It functions in the pathway carbohydrate degradation; glycolysis; pyruvate from D-glyceraldehyde 3-phosphate: step 4/5. Catalyzes the reversible conversion of 2-phosphoglycerate (2-PG) into phosphoenolpyruvate (PEP). It is essential for the degradation of carbohydrates via glycolysis. The protein is Enolase of Sulfolobus acidocaldarius (strain ATCC 33909 / DSM 639 / JCM 8929 / NBRC 15157 / NCIMB 11770).